We begin with the raw amino-acid sequence, 483 residues long: MEILCHSAPLHEIKAEASLIFVINKEFSHEWIADSELFGSVGFEGKEGQTLFIPQSKTLYYALDSLTPDSIRESSAKALRALKKYPFSSFKVGIYTQESLECLEAMAAGFLLGDYNFETYKSQKSESKLTQILISLQTHLGRQIDSKSFETILARQSAIARAVNLARELVNTPPEDATPQKIAQAAQKVAQEHQLECRIEDEKFLEKEQMGAFLAVSRASIHRPRLIHLTHQSPKPKLKVALVGKGLTYDSGGLSLKPADFMVTMKADKGGGCAVIAILQAAKELGLELELHGIVGATENMIGGNAYKPDDVLRAKNGKTIEIRNTDAEGRLVLADCLVYAQELKPDYIIDLATLTGACVVGLGEYTSGVLGHSQELKHRFIECATQSGELTADLPFNRHLKKLIESKVADVCNVSSTRYGGSITAGLFLSEFIEESYKEKWLHLDIAGPAYVEKEWDVNPHGASGAGVRMVLQFLEQLTKES.

Mn(2+)-binding residues include Lys245 and Asp250. Lys257 is a catalytic residue. Mn(2+) is bound by residues Asp268, Asp327, and Glu329. Residue Arg331 is part of the active site.

The protein belongs to the peptidase M17 family. Mn(2+) serves as cofactor.

The protein resides in the cytoplasm. It carries out the reaction Release of an N-terminal amino acid, Xaa-|-Yaa-, in which Xaa is preferably Leu, but may be other amino acids including Pro although not Arg or Lys, and Yaa may be Pro. Amino acid amides and methyl esters are also readily hydrolyzed, but rates on arylamides are exceedingly low.. It catalyses the reaction Release of an N-terminal amino acid, preferentially leucine, but not glutamic or aspartic acids.. In terms of biological role, presumably involved in the processing and regular turnover of intracellular proteins. Catalyzes the removal of unsubstituted N-terminal amino acids from various peptides. In Wolinella succinogenes (strain ATCC 29543 / DSM 1740 / CCUG 13145 / JCM 31913 / LMG 7466 / NCTC 11488 / FDC 602W) (Vibrio succinogenes), this protein is Probable cytosol aminopeptidase.